The following is a 389-amino-acid chain: 3-ketoacyl-CoA thiolase (389 aa).

Cys91 (acyl-thioester intermediate) is an active-site residue. Residues His343 and Cys373 each act as proton acceptor in the active site.

This sequence belongs to the thiolase-like superfamily. Thiolase family. Heterotetramer of two alpha chains (FadB) and two beta chains (FadA).

Its subcellular location is the cytoplasm. The catalysed reaction is an acyl-CoA + acetyl-CoA = a 3-oxoacyl-CoA + CoA. It participates in lipid metabolism; fatty acid beta-oxidation. Catalyzes the final step of fatty acid oxidation in which acetyl-CoA is released and the CoA ester of a fatty acid two carbons shorter is formed. The polypeptide is 3-ketoacyl-CoA thiolase (Pseudoalteromonas translucida (strain TAC 125)).